Here is a 312-residue protein sequence, read N- to C-terminus: Ribose-phosphate pyrophosphokinase (312 aa).

ATP-binding positions include 34 to 36 (DLE) and 93 to 94 (RQ). His-127 and Asp-168 together coordinate Mg(2+). Lys-192 is a catalytic residue. D-ribose 5-phosphate contacts are provided by residues Arg-194, Asp-218, and 222 to 226 (DSAGT).

The protein belongs to the ribose-phosphate pyrophosphokinase family. Class I subfamily. As to quaternary structure, homohexamer. Mg(2+) is required as a cofactor.

Its subcellular location is the cytoplasm. It carries out the reaction D-ribose 5-phosphate + ATP = 5-phospho-alpha-D-ribose 1-diphosphate + AMP + H(+). Its pathway is metabolic intermediate biosynthesis; 5-phospho-alpha-D-ribose 1-diphosphate biosynthesis; 5-phospho-alpha-D-ribose 1-diphosphate from D-ribose 5-phosphate (route I): step 1/1. Functionally, involved in the biosynthesis of the central metabolite phospho-alpha-D-ribosyl-1-pyrophosphate (PRPP) via the transfer of pyrophosphoryl group from ATP to 1-hydroxyl of ribose-5-phosphate (Rib-5-P). The protein is Ribose-phosphate pyrophosphokinase of Caulobacter vibrioides (strain ATCC 19089 / CIP 103742 / CB 15) (Caulobacter crescentus).